Reading from the N-terminus, the 397-residue chain is Protein Mx1 (397 aa).

The protein belongs to the TRAFAC class dynamin-like GTPase superfamily. Dynamin/Fzo/YdjA family.

The chain is Protein Mx1 (Mx1) from Mus musculus (Mouse).